The sequence spans 247 residues: ATP synthase delta chain, chloroplastic (247 aa).

The transit peptide at Met1–Arg60 directs the protein to the chloroplast.

Belongs to the ATPase delta chain family. As to quaternary structure, F-type ATPases have 2 components, CF(1) - the catalytic core - and CF(0) - the membrane proton channel. CF(1) has five subunits: alpha(3), beta(3), gamma(1), delta(1), epsilon(1). CF(0) has three main subunits: a, b and c.

The protein resides in the plastid. It is found in the chloroplast thylakoid membrane. Its function is as follows. This protein seems to be part of the stalk that links CF(0) to CF(1). It either transmits conformational changes from CF(0) into CF(1) or is implicated in proton conduction. This is ATP synthase delta chain, chloroplastic (ATPD) from Sorghum bicolor (Sorghum).